Here is a 288-residue protein sequence, read N- to C-terminus: UDP-3-O-acyl-N-acetylglucosamine deacetylase (288 aa).

The Zn(2+) site is built by histidine 79, histidine 236, and aspartate 240. Histidine 263 functions as the Proton donor in the catalytic mechanism.

The protein belongs to the LpxC family. Requires Zn(2+) as cofactor.

It carries out the reaction a UDP-3-O-[(3R)-3-hydroxyacyl]-N-acetyl-alpha-D-glucosamine + H2O = a UDP-3-O-[(3R)-3-hydroxyacyl]-alpha-D-glucosamine + acetate. The protein operates within glycolipid biosynthesis; lipid IV(A) biosynthesis; lipid IV(A) from (3R)-3-hydroxytetradecanoyl-[acyl-carrier-protein] and UDP-N-acetyl-alpha-D-glucosamine: step 2/6. Its function is as follows. Catalyzes the hydrolysis of UDP-3-O-myristoyl-N-acetylglucosamine to form UDP-3-O-myristoylglucosamine and acetate, the committed step in lipid A biosynthesis. This Rickettsia africae (strain ESF-5) protein is UDP-3-O-acyl-N-acetylglucosamine deacetylase.